Here is a 362-residue protein sequence, read N- to C-terminus: Mannose-1-phosphate guanyltransferase (362 aa).

It belongs to the transferase hexapeptide repeat family.

It localises to the cytoplasm. The catalysed reaction is alpha-D-mannose 1-phosphate + GTP + H(+) = GDP-alpha-D-mannose + diphosphate. Its pathway is nucleotide-sugar biosynthesis; GDP-alpha-D-mannose biosynthesis; GDP-alpha-D-mannose from alpha-D-mannose 1-phosphate (GTP route): step 1/1. Functionally, involved in cell wall synthesis where it is required for glycosylation. Involved in cell cycle progression through cell-size checkpoint. The protein is Mannose-1-phosphate guanyltransferase (MPG1) of Candida albicans (strain SC5314 / ATCC MYA-2876) (Yeast).